Here is a 409-residue protein sequence, read N- to C-terminus: NADH-quinone oxidoreductase subunit D (409 aa).

This sequence belongs to the complex I 49 kDa subunit family. In terms of assembly, NDH-1 is composed of 14 different subunits. Subunits NuoB, C, D, E, F, and G constitute the peripheral sector of the complex.

The protein localises to the cell inner membrane. The catalysed reaction is a quinone + NADH + 5 H(+)(in) = a quinol + NAD(+) + 4 H(+)(out). Functionally, NDH-1 shuttles electrons from NADH, via FMN and iron-sulfur (Fe-S) centers, to quinones in the respiratory chain. The immediate electron acceptor for the enzyme in this species is believed to be ubiquinone. Couples the redox reaction to proton translocation (for every two electrons transferred, four hydrogen ions are translocated across the cytoplasmic membrane), and thus conserves the redox energy in a proton gradient. This Helicobacter pylori (strain P12) protein is NADH-quinone oxidoreductase subunit D.